The primary structure comprises 144 residues: L-fucose mutarotase (144 aa).

Catalysis depends on histidine 22, which acts as the Proton donor. Residues aspartate 30, arginine 109, and 131-133 contribute to the substrate site; that span reads YGN.

This sequence belongs to the RbsD / FucU family. FucU mutarotase subfamily. In terms of assembly, homodecamer.

It is found in the cytoplasm. It carries out the reaction alpha-L-fucose = beta-L-fucose. It participates in carbohydrate metabolism; L-fucose metabolism. Functionally, involved in the anomeric conversion of L-fucose. This chain is L-fucose mutarotase, found in Haemophilus influenzae (strain 86-028NP).